The sequence spans 359 residues: Histidinol-phosphate aminotransferase (359 aa).

Residue lysine 217 is modified to N6-(pyridoxal phosphate)lysine.

It belongs to the class-II pyridoxal-phosphate-dependent aminotransferase family. Histidinol-phosphate aminotransferase subfamily. In terms of assembly, homodimer. Requires pyridoxal 5'-phosphate as cofactor.

The catalysed reaction is L-histidinol phosphate + 2-oxoglutarate = 3-(imidazol-4-yl)-2-oxopropyl phosphate + L-glutamate. It participates in amino-acid biosynthesis; L-histidine biosynthesis; L-histidine from 5-phospho-alpha-D-ribose 1-diphosphate: step 7/9. The chain is Histidinol-phosphate aminotransferase from Salmonella enteritidis PT4 (strain P125109).